The chain runs to 194 residues: Mpv17-like protein (194 aa).

At 1-14 (MASWWRAFPQAARR) the chain is on the cytoplasmic side. Residues 15–34 (YPWPTNVLLYAGLFSAGDAL) traverse the membrane as a helical segment. The segment at 16–55 (PWPTNVLLYAGLFSAGDALQQRLRGGPADWRQTRRVATLA) is targeting to peroxisomes. Over 35-50 (QQRLRGGPADWRQTRR) the chain is Lumenal. Residues 51–67 (VATLAVTFHGNFNYVWL) traverse the membrane as a helical segment. Over 68-91 (RLLERALPGRAPRTVLAKVLCDQT) the chain is Cytoplasmic. Residues 92-110 (VGGPIALSAFYVGMSVLQG) traverse the membrane as a helical segment. The Lumenal segment spans residues 111–150 (KDDIFLDLKQKFWNTYKSGLMYWPFVQLTNFSLVPVHWRT). The helical transmembrane segment at 151–168 (AYTGLCAFLWATFLCFSQ) threads the bilayer. Topologically, residues 169 to 194 (QSGDGTLQSIFIFLRRKEASDKSPEK) are cytoplasmic.

It belongs to the peroxisomal membrane protein PXMP2/4 family. Isoform 1 and isoform 3 are expressed in the kidney (at protein level). Isoform 1 is expressed in the kidney, spleen, heart, brain, lung and liver. Isoform 3 is expressed in the kidney. Isoform 1 and isoform 3 expression increase during development, reache their highest level in adulthood and decrease with aging.

Its subcellular location is the peroxisome membrane. The protein localises to the cytoplasm. Functionally, participates in reactive oxygen species metabolism by up- or down-regulation of the genes of antioxidant enzymes. Protective against the mitochondrial apoptotic cascade. Participates in reactive oxygen species metabolism by up- or down-regulation of the genes of antioxidant enzymes. The polypeptide is Mpv17-like protein (Mpv17l) (Mus musculus (Mouse)).